A 192-amino-acid chain; its full sequence is Ion-translocating oxidoreductase complex subunit A (192 aa).

A run of 6 helical transmembrane segments spans residues 5–25, 39–59, 65–85, 102–122, 134–154, and 171–191; these read LLLL…FLGL, IGMS…SYLV, LPFD…AVVV, ALGI…VALL, AIYG…FSAM, and AIAM…TGLV.

Belongs to the NqrDE/RnfAE family. The complex is composed of six subunits: RnfA, RnfB, RnfC, RnfD, RnfE and RnfG.

Its subcellular location is the cell inner membrane. Its function is as follows. Part of a membrane-bound complex that couples electron transfer with translocation of ions across the membrane. This Shewanella sp. (strain MR-4) protein is Ion-translocating oxidoreductase complex subunit A.